A 382-amino-acid chain; its full sequence is MFENFSPSTMLAIKKYAYWLWLLLALSMPFNYWMAQDSAHPAFWAFSLVIAVFGIGPLLDMLFGRDPANPDEETQTPQLLGQGYYVLLTLATVPVLIGTLVWAAGVFVAFQEWGWLGRLGWILSMGTVMGAVGIVVAHELIHKDSALEQAAGGILLAAVCYAGFKVEHVRGHHVHVSTPEDASSARFGQSVYQFLPHAYKYNFLNAWRLEAVRLRKKGLPVFGWQNELIWWYLLSLALLVGFGWAFGWLGMVFFLGQAFVAVTLLEIINYVEHYGLHRRKGEDGRYERTNHTHSWNSNFVFTNLVLFHLQRHSDHHAFAKRPYQVLRHYDDSPQMPSGYAGMVVLALIPPLWRAVMDPKVRAYYAGEEFQLTAEQSERPAAS.

4 helical membrane-spanning segments follow: residues 10–30 (MLAIKKYAYWLWLLLALSMPF), 43–63 (FWAFSLVIAVFGIGPLLDMLF), 90–110 (LATVPVLIGTLVWAAGVFVAF), and 121–141 (WILSMGTVMGAVGIVVAHELI). Fe cation is bound by residues His138 and His142. Residues 146–166 (ALEQAAGGILLAAVCYAGFKV) form a helical membrane-spanning segment. Positions 168, 172, and 173 each coordinate Fe cation. A helical membrane pass occupies residues 236–256 (LALLVGFGWAFGWLGMVFFLG). 3 residues coordinate Fe cation: His312, His315, and His316.

The protein belongs to the fatty acid desaturase type 1 family. AlkB subfamily. Fe(3+) serves as cofactor.

It is found in the cell inner membrane. The catalysed reaction is octane + 2 reduced [rubredoxin] + O2 + 2 H(+) = 2 oxidized [rubredoxin] + octan-1-ol + H2O. It functions in the pathway hydrocarbon metabolism; alkane degradation. Functionally, catalyzes the hydroxylation of n-alkanes in the presence of a NADH-rubredoxin reductase and rubredoxin. It preferably hydroxylases C16-C24 hydrocarbons. The sequence is that of Alkane 1-monooxygenase 1 (alkB1) from Pseudomonas aeruginosa (strain ATCC 15692 / DSM 22644 / CIP 104116 / JCM 14847 / LMG 12228 / 1C / PRS 101 / PAO1).